The chain runs to 151 residues: Probable cGMP 3',5'-cyclic phosphodiesterase subunit delta (151 aa).

This sequence belongs to the PDE6D/unc-119 family. In terms of assembly, interacts with Pde6.

Its subcellular location is the nucleus. It localises to the cytoplasm. The protein is Probable cGMP 3',5'-cyclic phosphodiesterase subunit delta of Drosophila simulans (Fruit fly).